The primary structure comprises 473 residues: Ribulose bisphosphate carboxylase large chain (473 aa).

Residues Asn-116 and Thr-166 each contribute to the substrate site. Lys-168 acts as the Proton acceptor in catalysis. A substrate-binding site is contributed by Lys-170. Residues Lys-194, Asp-196, and Glu-197 each contribute to the Mg(2+) site. An N6-carboxylysine modification is found at Lys-194. The active-site Proton acceptor is His-287. The substrate site is built by Arg-288, His-320, and Ser-372.

The protein belongs to the RuBisCO large chain family. Type I subfamily. In terms of assembly, heterohexadecamer of 8 large chains and 8 small chains. Requires Mg(2+) as cofactor.

It carries out the reaction 2 (2R)-3-phosphoglycerate + 2 H(+) = D-ribulose 1,5-bisphosphate + CO2 + H2O. The catalysed reaction is D-ribulose 1,5-bisphosphate + O2 = 2-phosphoglycolate + (2R)-3-phosphoglycerate + 2 H(+). RuBisCO catalyzes two reactions: the carboxylation of D-ribulose 1,5-bisphosphate, the primary event in carbon dioxide fixation, as well as the oxidative fragmentation of the pentose substrate. Both reactions occur simultaneously and in competition at the same active site. The chain is Ribulose bisphosphate carboxylase large chain from Nitrosospira sp. (strain TCH716).